Consider the following 213-residue polypeptide: Adenylate kinase (213 aa).

Position 14 to 19 (14 to 19) interacts with ATP; it reads GSGKGT. Positions 34–63 are NMP; sequence SSGELFRSAIDSASPLGIKAAEYINQGLLV. Residues S35, R40, 61 to 63, 89 to 92, and Q96 each bind AMP; these read LLV and GFPR. The LID stretch occupies residues 129–162; that stretch reads SRFICPSCKHVYNQNQGLSECPTCQMKLVRRSDD. Residue R130 coordinates ATP. Positions 133 and 136 each coordinate Zn(2+). ATP is bound at residue 139–140; the sequence is VY. Zn(2+) is bound by residues C149 and C152. Residues R159 and R170 each contribute to the AMP site. Residue A198 coordinates ATP.

The protein belongs to the adenylate kinase family. As to quaternary structure, monomer.

It localises to the cytoplasm. It carries out the reaction AMP + ATP = 2 ADP. The protein operates within purine metabolism; AMP biosynthesis via salvage pathway; AMP from ADP: step 1/1. In terms of biological role, catalyzes the reversible transfer of the terminal phosphate group between ATP and AMP. Plays an important role in cellular energy homeostasis and in adenine nucleotide metabolism. The chain is Adenylate kinase from Chlamydia abortus (strain DSM 27085 / S26/3) (Chlamydophila abortus).